A 122-amino-acid chain; its full sequence is Large ribosomal subunit protein uL14 (122 aa).

Belongs to the universal ribosomal protein uL14 family. In terms of assembly, part of the 50S ribosomal subunit. Forms a cluster with proteins L3 and L19. In the 70S ribosome, L14 and L19 interact and together make contacts with the 16S rRNA in bridges B5 and B8.

Its function is as follows. Binds to 23S rRNA. Forms part of two intersubunit bridges in the 70S ribosome. The protein is Large ribosomal subunit protein uL14 of Mycoplasma mobile (strain ATCC 43663 / 163K / NCTC 11711) (Mesomycoplasma mobile).